The primary structure comprises 43 residues: Phi-Lf prophage-derived putative minor coat protein (43 aa).

The sequence is that of Phi-Lf prophage-derived putative minor coat protein (gVII-1) from Xanthomonas campestris pv. campestris (strain ATCC 33913 / DSM 3586 / NCPPB 528 / LMG 568 / P 25).